A 554-amino-acid chain; its full sequence is Macrophage colony-stimulating factor 1 (554 aa).

Residues Met1 to Thr32 form the signal peptide. The Lumenal segment spans residues Glu33–Ser496. Disulfide bonds link Cys39–Cys122, Cys80–Cys171, and Cys134–Cys178. Residues Asn154 and Asn172 are each glycosylated (N-linked (GlcNAc...) asparagine). The interval Glu224–Ser488 is disordered. Thr266 carries the phosphothreonine; by FAM20C modification. A glycan (O-linked (Xyl...) (chondroitin sulfate) serine) is linked at Ser309. Positions Leu344–Ala354 are enriched in low complexity. Residues Thr363 and Thr365 are each glycosylated (O-linked (GalNAc...) threonine). Polar residues predominate over residues Arg404 to Ser433. The O-glycosylated at one site stretch occupies residues Ser406–Ser426. Over residues Leu440–Ala453 the composition is skewed to basic and acidic residues. The chain crosses the membrane as a helical span at residues Val497–Phe517. Residues Tyr518 to Val554 are Cytoplasmic-facing. The disordered stretch occupies residues Gln526 to Val554. Over residues Gln545–Val554 the composition is skewed to basic and acidic residues.

In terms of assembly, homodimer or heterodimer; disulfide-linked. Likely to exist in multiple forms: homodimer consisting of 2 identical 150-200 kDa proteoglycan subunits, heterodimer consisting of a 150-200 kDa proteoglycan subunit and a truncated 43 kDa subunit, and homodimer consisting of 2 identical 43 kDa subunits. Interacts with CSF1R. In terms of processing, N-glycosylated. Post-translationally, O-glycosylated; contains chondroitin sulfate. O-glycosylated with core 1 or possibly core 8 glycans. O-glycosylated.

It localises to the cell membrane. Its subcellular location is the secreted. The protein localises to the extracellular space. Its function is as follows. Cytokine that plays an essential role in the regulation of survival, proliferation and differentiation of hematopoietic precursor cells, especially mononuclear phagocytes, such as macrophages and monocytes. Promotes the release of pro-inflammatory chemokines, and thereby plays an important role in innate immunity and in inflammatory processes. Plays an important role in the regulation of osteoclast proliferation and differentiation, the regulation of bone resorption, and is required for normal bone development. Required for normal male and female fertility. Promotes reorganization of the actin cytoskeleton, regulates formation of membrane ruffles, cell adhesion and cell migration. Plays a role in lipoprotein clearance. This Homo sapiens (Human) protein is Macrophage colony-stimulating factor 1 (CSF1).